We begin with the raw amino-acid sequence, 320 residues long: Lipoyl synthase (320 aa).

7 residues coordinate [4Fe-4S] cluster: C67, C72, C78, C93, C97, C100, and S307. The region spanning 79–296 (FNHGTATFMI…RDKANEMGFE (218 aa)) is the Radical SAM core domain.

Belongs to the radical SAM superfamily. Lipoyl synthase family. The cofactor is [4Fe-4S] cluster.

Its subcellular location is the cytoplasm. The enzyme catalyses [[Fe-S] cluster scaffold protein carrying a second [4Fe-4S](2+) cluster] + N(6)-octanoyl-L-lysyl-[protein] + 2 oxidized [2Fe-2S]-[ferredoxin] + 2 S-adenosyl-L-methionine + 4 H(+) = [[Fe-S] cluster scaffold protein] + N(6)-[(R)-dihydrolipoyl]-L-lysyl-[protein] + 4 Fe(3+) + 2 hydrogen sulfide + 2 5'-deoxyadenosine + 2 L-methionine + 2 reduced [2Fe-2S]-[ferredoxin]. It participates in protein modification; protein lipoylation via endogenous pathway; protein N(6)-(lipoyl)lysine from octanoyl-[acyl-carrier-protein]: step 2/2. In terms of biological role, catalyzes the radical-mediated insertion of two sulfur atoms into the C-6 and C-8 positions of the octanoyl moiety bound to the lipoyl domains of lipoate-dependent enzymes, thereby converting the octanoylated domains into lipoylated derivatives. This is Lipoyl synthase from Haemophilus influenzae (strain 86-028NP).